We begin with the raw amino-acid sequence, 315 residues long: Methionyl-tRNA formyltransferase (315 aa).

113-116 (SLLP) lines the (6S)-5,6,7,8-tetrahydrofolate pocket.

It belongs to the Fmt family.

It catalyses the reaction L-methionyl-tRNA(fMet) + (6R)-10-formyltetrahydrofolate = N-formyl-L-methionyl-tRNA(fMet) + (6S)-5,6,7,8-tetrahydrofolate + H(+). In terms of biological role, attaches a formyl group to the free amino group of methionyl-tRNA(fMet). The formyl group appears to play a dual role in the initiator identity of N-formylmethionyl-tRNA by promoting its recognition by IF2 and preventing the misappropriation of this tRNA by the elongation apparatus. This is Methionyl-tRNA formyltransferase from Yersinia enterocolitica serotype O:8 / biotype 1B (strain NCTC 13174 / 8081).